Consider the following 621-residue polypeptide: Methionine--tRNA ligase (621 aa).

The 'HIGH' region motif lies at 11 to 21 (PYANGPRHIGH). The Zn(2+) site is built by cysteine 143, cysteine 146, cysteine 156, and cysteine 159. The 'KMSKS' region motif lies at 347 to 351 (KFSSS). Serine 350 provides a ligand contact to ATP.

This sequence belongs to the class-I aminoacyl-tRNA synthetase family. MetG type 1 subfamily. As to quaternary structure, monomer. The cofactor is Zn(2+).

The protein localises to the cytoplasm. It carries out the reaction tRNA(Met) + L-methionine + ATP = L-methionyl-tRNA(Met) + AMP + diphosphate. Functionally, is required not only for elongation of protein synthesis but also for the initiation of all mRNA translation through initiator tRNA(fMet) aminoacylation. This Bifidobacterium longum (strain NCC 2705) protein is Methionine--tRNA ligase.